A 310-amino-acid chain; its full sequence is MLYQQSYPITNKLLNASAAGSTSTASIIDGGCTLSKPGSGKTKSTTSLPSFNELLTSIPLPNEFKPSTKNTNQAAAATATSPYNYYMGPPAQHRLPTPPPYPMSSPTTATAATPLSQQSPHLQPQQTLQQPQPYHQQYYNYQYAAPPYPHPSQVPPPASYQQRHQQPMYQNTNGVPIIIRPSPGLITPTSTTFDHAKIRSNSTGDLSANSLALSSNNNTQSKDPRRKHVCKVCSRSFTTSGHLARHNRIHTGERKHQCPWPTCEARFARQDNCNQHYKTHTNGKNKRNRQQHRTLEASHVGTKYNTKSLV.

Residues 85 to 131 (YYMGPPAQHRLPTPPPYPMSSPTTATAATPLSQQSPHLQPQQTLQQP) are disordered. The segment covering 104–131 (SSPTTATAATPLSQQSPHLQPQQTLQQP) has biased composition (low complexity). 2 C2H2-type zinc fingers span residues 228-250 (HVCK…NRIH) and 256-280 (HQCP…YKTH).

It localises to the nucleus. Functionally, transcriptional repressor that binds NRG1 response elements (NRE) of target promoters. Involved in regulation of chlamydospore formation, hyphal growth, virulence, and stress response. Plays a key role in regulating true hyphal growth, but does not regulate pseudohyphal growth in the same fashion. Directs transcriptional repression of a subset of filament-specific genes such as HWP1, HYR1, ALS8, HWP1, or ECE1; via the TUP1 pathway. Functions with UME6 in a negative feedback loop to control the level and duration of filament-specific gene expression in response to inducing conditions. Plays a key role in biofilm formation and dispersion. Also plays the role of a negative regulator of virulence in mice models. Required for the expression of the cell wall genes RBR1. This chain is Transcriptional regulator NRG1 (NRG1), found in Candida albicans (strain SC5314 / ATCC MYA-2876) (Yeast).